We begin with the raw amino-acid sequence, 558 residues long: Phosphatidylserine lipase ABHD16A (558 aa).

The next 2 helical transmembrane spans lie at 60-80 (ILAL…FAFF) and 93-113 (VVPF…VACL). Residues 114–558 (RGIGRWTNPQ…AQNFQMPWHL (445 aa)) lie on the Cytoplasmic side of the membrane. The AB hydrolase-1 domain occupies 281-407 (LVICCEGNAG…LVTRTVRQHL (127 aa)). Catalysis depends on charge relay system residues serine 355, aspartate 430, and histidine 507.

This sequence belongs to the AB hydrolase superfamily. ABHD16 family.

Its subcellular location is the membrane. The catalysed reaction is 1-heptadecanoyl-2-(5Z,8Z,11Z,14Z-eicosatetraenoyl)-sn-glycero-3-phosphoserine + H2O = 1-heptadecanoyl-sn-glycero-3-phosphoserine + (5Z,8Z,11Z,14Z)-eicosatetraenoate + H(+). It catalyses the reaction 1-hexadecanoyl-2-(9Z-octadecenoyl)-sn-glycero-3-phospho-L-serine + H2O = 1-hexadecanoyl-sn-glycero-3-phospho-L-serine + (9Z)-octadecenoate + H(+). The enzyme catalyses 1-octadecanoyl-2-(9Z,12Z-octadecadienoyl)-sn-glycero-3-phosphoserine + H2O = 1-octadecanoyl-sn-glycero-3-phosphoserine + (9Z,12Z)-octadecadienoate + H(+). It carries out the reaction 1-heptadecanoyl-2-(5Z,8Z,11Z,14Z-eicosatetraenoyl)-sn-glycero-3-phosphocholine + H2O = 1-heptadecanoyl-sn-glycero-3-phosphocholine + (5Z,8Z,11Z,14Z)-eicosatetraenoate + H(+). The catalysed reaction is 1-hexadecanoyl-2-(9Z-octadecenoyl)-sn-glycero-3-phosphoglycerol + H2O = 1-hexadecanoyl-sn-glycero-3-phosphoglycerol + (9Z)-octadecenoate + H(+). It catalyses the reaction 1-hexadecanoyl-2-(9Z-octadecenoyl)-sn-glycero-3-phospho-(1D-myo-inositol) + H2O = 1-hexadecanoyl-sn-glycero-3-phospho-(1D-myo-inositol) + (9Z)-octadecenoate + H(+). The enzyme catalyses 1-heptadecanoyl-2-(5Z,8Z,11Z,14Z-eicosatetraenoyl)-sn-glycero-3-phosphoethanolamine + H2O = 1-heptadecanoyl-sn-glycero-3-phosphoethanolamine + (5Z,8Z,11Z,14Z)-eicosatetraenoate + H(+). It carries out the reaction 1-hexadecanoyl-2-(9Z-octadecenoyl)-sn-glycero-3-phospho-(1'-sn-glycerol) + H2O = 1-hexadecanoyl-sn-glycero-3-phospho-(1'-sn-glycerol) + (9Z)-octadecenoate + H(+). The catalysed reaction is Hydrolyzes glycerol monoesters of long-chain fatty acids.. It catalyses the reaction 1-tetradecanoylglycerol + H2O = tetradecanoate + glycerol + H(+). The enzyme catalyses 2-hexadecanoylglycerol + H2O = glycerol + hexadecanoate + H(+). It carries out the reaction 1-(9Z-octadecenoyl)-glycerol + H2O = glycerol + (9Z)-octadecenoate + H(+). The catalysed reaction is 2-(9Z-octadecenoyl)-glycerol + H2O = glycerol + (9Z)-octadecenoate + H(+). It catalyses the reaction 2-(9Z,12Z-octadecadienoyl)-glycerol + H2O = (9Z,12Z)-octadecadienoate + glycerol + H(+). The enzyme catalyses 1-(5Z,8Z,11Z,14Z-eicosatetraenoyl)-glycerol + H2O = glycerol + (5Z,8Z,11Z,14Z)-eicosatetraenoate + H(+). It carries out the reaction 2-(5Z,8Z,11Z,14Z-eicosatetraenoyl)-glycerol + H2O = glycerol + (5Z,8Z,11Z,14Z)-eicosatetraenoate + H(+). The catalysed reaction is prostaglandin D2-1-glycerol ester + H2O = prostaglandin D2 + glycerol + H(+). It catalyses the reaction 2-glyceryl-15-deoxy-Delta(12,14)-prostaglandin J2 + H2O = 15-deoxy-Delta(12,14)-prostaglandin J2 + glycerol + H(+). The enzyme catalyses 1-(9Z,12Z-octadecadienoyl)-glycerol + H2O = (9Z,12Z)-octadecadienoate + glycerol + H(+). Its function is as follows. Phosphatidylserine (PS) lipase that mediates the hydrolysis of phosphatidylserine to generate lysophosphatidylserine (LPS). LPS constitutes a class of signaling lipids that regulates immunological and neurological processes. Has no activity towards diacylglycerol, triacylglycerol or lysophosphatidylserine lipase. Also has monoacylglycerol lipase activity, with preference for 1-(9Z,12Z-octadecadienoyl)-glycerol (1-LG) and 2-glyceryl-15-deoxy-Delta(12,14)-prostaglandin J2 (15d-PGJ(2)-G). In Macaca fascicularis (Crab-eating macaque), this protein is Phosphatidylserine lipase ABHD16A.